Here is a 482-residue protein sequence, read N- to C-terminus: 7-deoxyloganetic acid glucosyl transferase (482 aa).

Residue His22 is the Proton acceptor of the active site. An an anthocyanidin-binding site is contributed by His22. Residue Asp127 is the Charge relay of the active site. Residues Thr149, Ala362, Gln364, His379, Trp382, Asn383, Ser384, and Glu387 each contribute to the UDP-alpha-D-glucose site. Ala402 contacts an anthocyanidin. UDP-alpha-D-glucose is bound by residues Asp403 and Gln404.

It belongs to the UDP-glycosyltransferase family. In terms of tissue distribution, expressed in the leaf internal phloem-associated parenchyma (IPAP) inside the mesophyll. Mostly observed in leaves, roots and stems, and, to a lower extent, in flowers.

It is found in the nucleus. The protein localises to the cytoplasm. Its subcellular location is the cytosol. It carries out the reaction 7-deoxyloganetate + UDP-alpha-D-glucose = 7-deoxyloganate + UDP + H(+). The protein operates within alkaloid biosynthesis. Its function is as follows. Component of the seco-iridoid and derivatives monoterpenoid indole alkaloids (MIAs, e.g. vincristine, quinine, and strychnine) biosynthesis pathway. Catalyzes the glucosylation of 7-deoxyloganetic acid to form 7-deoxyloganic acid using UDP-glucose as the sugar donor. Inactive with loganetic acid, loganetin, iridodial, iridotrial, 8-OH-geraniol, jasmonic acid, gibberellic acid, indole acetic acid, salicylic acid, abscisic acid, zeatin and luteolin. The chain is 7-deoxyloganetic acid glucosyl transferase from Catharanthus roseus (Madagascar periwinkle).